Consider the following 61-residue polypeptide: Metallothionein-1D (61 aa).

The interval 1 to 29 is beta; that stretch reads MDPNCSCSTGGSCSCATSCTCKACRCTSC. Positions 5, 7, 13, 15, 19, 21, 24, 26, 29, 33, 34, 36, 37, 41, 44, 48, 50, 57, 59, and 60 each coordinate a divalent metal cation. The interval 30–61 is alpha; it reads KKSCCSCCPAGCAKCAQGCICKGASDKCSCCA.

It belongs to the metallothionein superfamily. Type 1 family. In terms of assembly, monomer.

Metallothioneins have a high content of cysteine residues that bind various heavy metals; these proteins are transcriptionally regulated by both heavy metals and glucocorticoids. The sequence is that of Metallothionein-1D (MT1D) from Sus scrofa (Pig).